Consider the following 111-residue polypeptide: Cytochrome c6 (111 aa).

Positions 1 to 25 (MKRLLSLIFLVFVFFAVMLTPPALA) are cleaved as a signal peptide. The heme c site is built by C39, C42, H43, and M83.

Belongs to the cytochrome c family. PetJ subfamily. In terms of assembly, monomer. In terms of processing, binds 1 heme c group covalently per subunit.

Its subcellular location is the cellular thylakoid lumen. Its function is as follows. Functions as an electron carrier between membrane-bound cytochrome b6-f and photosystem I in oxygenic photosynthesis. This Rippkaea orientalis (strain PCC 8801 / RF-1) (Cyanothece sp. (strain PCC 8801)) protein is Cytochrome c6.